The chain runs to 433 residues: Methylenetetrahydrofolate--tRNA-(uracil-5-)-methyltransferase TrmFO (433 aa).

8–13 (GAGLAG) is an FAD binding site.

It belongs to the MnmG family. TrmFO subfamily. FAD is required as a cofactor.

The protein localises to the cytoplasm. The catalysed reaction is uridine(54) in tRNA + (6R)-5,10-methylene-5,6,7,8-tetrahydrofolate + NADH + H(+) = 5-methyluridine(54) in tRNA + (6S)-5,6,7,8-tetrahydrofolate + NAD(+). It catalyses the reaction uridine(54) in tRNA + (6R)-5,10-methylene-5,6,7,8-tetrahydrofolate + NADPH + H(+) = 5-methyluridine(54) in tRNA + (6S)-5,6,7,8-tetrahydrofolate + NADP(+). Functionally, catalyzes the folate-dependent formation of 5-methyl-uridine at position 54 (M-5-U54) in all tRNAs. In Carboxydothermus hydrogenoformans (strain ATCC BAA-161 / DSM 6008 / Z-2901), this protein is Methylenetetrahydrofolate--tRNA-(uracil-5-)-methyltransferase TrmFO.